The primary structure comprises 379 residues: F-box protein At1g67340 (379 aa).

Residues 41-92 (ADLLDSIPDDLVISILCKLGSTSRCPADFINVLLTCKRLKGLAMNPIVLSRL) form the F-box domain. The Zn(2+) site is built by histidine 304, cysteine 307, cysteine 320, cysteine 323, cysteine 329, cysteine 333, histidine 342, and cysteine 346. The segment at 304-346 (HAGCGRPETRKHEFRRCSVCGVVNYCSRACQALDWKLRHKMDC) adopts an MYND-type; atypical zinc-finger fold. A disordered region spans residues 358–379 (GGEGNVQIDGNGNGDNVLLPMS).

In terms of assembly, part of a SCF (ASK-cullin-F-box) protein ligase complex. Interacts with SKP1A/ASK1, SKP1B/ASK2, ASK4, ASK11 and ASK13.

Its subcellular location is the nucleus. The protein operates within protein modification; protein ubiquitination. Functionally, component of SCF(ASK-cullin-F-box) E3 ubiquitin ligase complexes, which may mediate the ubiquitination and subsequent proteasomal degradation of target proteins. This Arabidopsis thaliana (Mouse-ear cress) protein is F-box protein At1g67340.